The chain runs to 175 residues: Cuticle protein 16.5, isoform B (175 aa).

19 repeat units span residues 17-20 (AAPA), 25-28 (AAPA), 31-34 (AAPA), 38-41 (AAPA), 44-47 (AAPA), 51-54 (AAPA), 57-60 (AAPA), 64-67 (AAPA), 70-73 (AAPA), 77-80 (AAPA), 83-86 (AAPA), 91-94 (AAPA), 99-102 (AAPA), 106-109 (AAPA), 134-137 (AAPA), 144-147 (AAPA), 151-154 (AAPA), 158-161 (AAPA), and 165-168 (AAPA).

Component of the cuticle of migratory locust which contains more than 100 different structural proteins. This Locusta migratoria (Migratory locust) protein is Cuticle protein 16.5, isoform B.